The following is a 121-amino-acid chain: uncharacterized protein (121 aa).

The chain crosses the membrane as a helical span at residues 65–84; the sequence is TILFYTPTLICFLFLQNFLY.

It is found in the membrane. This is an uncharacterized protein from Saccharomyces cerevisiae (strain ATCC 204508 / S288c) (Baker's yeast).